A 349-amino-acid polypeptide reads, in one-letter code: sn-glycerol-3-phosphate import ATP-binding protein UgpC (349 aa).

The 231-residue stretch at 4–234 (ISLRDVRKSY…PATTFVAGFI (231 aa)) folds into the ABC transporter domain. 36–43 (GPSGCGKS) is an ATP binding site.

Belongs to the ABC transporter superfamily. sn-glycerol-3-phosphate importer (TC 3.A.1.1.3) family. In terms of assembly, the complex is composed of two ATP-binding proteins (UgpC), two transmembrane proteins (UgpA and UgpE) and a solute-binding protein (UgpB).

It is found in the cell inner membrane. The enzyme catalyses sn-glycerol 3-phosphate(out) + ATP + H2O = sn-glycerol 3-phosphate(in) + ADP + phosphate + H(+). Its function is as follows. Part of the ABC transporter complex UgpBAEC involved in sn-glycerol-3-phosphate (G3P) import. Responsible for energy coupling to the transport system. The polypeptide is sn-glycerol-3-phosphate import ATP-binding protein UgpC (Cereibacter sphaeroides (strain ATCC 17023 / DSM 158 / JCM 6121 / CCUG 31486 / LMG 2827 / NBRC 12203 / NCIMB 8253 / ATH 2.4.1.) (Rhodobacter sphaeroides)).